The following is a 178-amino-acid chain: NAD(P)H-quinone oxidoreductase subunit J (178 aa).

It belongs to the complex I 30 kDa subunit family. NDH-1 can be composed of about 15 different subunits; different subcomplexes with different compositions have been identified which probably have different functions.

Its subcellular location is the cellular thylakoid membrane. It catalyses the reaction a plastoquinone + NADH + (n+1) H(+)(in) = a plastoquinol + NAD(+) + n H(+)(out). It carries out the reaction a plastoquinone + NADPH + (n+1) H(+)(in) = a plastoquinol + NADP(+) + n H(+)(out). NDH-1 shuttles electrons from an unknown electron donor, via FMN and iron-sulfur (Fe-S) centers, to quinones in the respiratory and/or the photosynthetic chain. The immediate electron acceptor for the enzyme in this species is believed to be plastoquinone. Couples the redox reaction to proton translocation, and thus conserves the redox energy in a proton gradient. Cyanobacterial NDH-1 also plays a role in inorganic carbon-concentration. This is NAD(P)H-quinone oxidoreductase subunit J from Crocosphaera subtropica (strain ATCC 51142 / BH68) (Cyanothece sp. (strain ATCC 51142)).